A 90-amino-acid chain; its full sequence is MSRTIFCTFLKKEAIGQDFQIYPGDIGRRIYDDISQEAWSLWLNKQTMLINEKKLSMIHHEDRALLEREMIQFLFEGKDVHVSGYIPPKD.

This sequence belongs to the Fe(2+)-trafficking protein family. As to quaternary structure, monomer.

Could be a mediator in iron transactions between iron acquisition and iron-requiring processes, such as synthesis and/or repair of Fe-S clusters in biosynthetic enzymes. The sequence is that of Probable Fe(2+)-trafficking protein from Hamiltonella defensa subsp. Acyrthosiphon pisum (strain 5AT).